The following is a 344-amino-acid chain: MERIVTPAEMFEDGNSELSLRPQKINEYIGQDKVKERLNIFIKAAKNRKEALDHVLLYGPPGLGKTTLANIIAKEMTGDLKITSGPAIERAGDLAAILTTLKDYDVLFIDEIHRLNRSVEEILYPAMEDYALDIVIGKGAAAKSIRLDLPKFTLIGATTRIGMLTSPLRDRFGVLCAMEYYDENQLKEIVIRSAAVFGCKITEEGALEIASRSRGTPRIANRLLKRVRDYSEVKSNTVISLKEAREALELLEVDNQGFDKVDNKILEAIIDNFNGGPVGIETLSYFIGEELGTVEDVYEPYLLQKGFIVRTPRGRIASDKAYKHLGRVNNKNNNSNKGQTSFFK.

Residues 1 to 181 (MERIVTPAEM…FGVLCAMEYY (181 aa)) are large ATPase domain (RuvB-L). ATP is bound by residues L20, R21, G62, K65, T66, T67, 128 to 130 (EDY), R171, Y181, and R218. Mg(2+) is bound at residue T66. A small ATPAse domain (RuvB-S) region spans residues 182-252 (DENQLKEIVI…EAREALELLE (71 aa)). Residues 255 to 344 (NQGFDKVDNK…SNKGQTSFFK (90 aa)) form a head domain (RuvB-H) region. Residues R310 and R315 each coordinate DNA.

Belongs to the RuvB family. As to quaternary structure, homohexamer. Forms an RuvA(8)-RuvB(12)-Holliday junction (HJ) complex. HJ DNA is sandwiched between 2 RuvA tetramers; dsDNA enters through RuvA and exits via RuvB. An RuvB hexamer assembles on each DNA strand where it exits the tetramer. Each RuvB hexamer is contacted by two RuvA subunits (via domain III) on 2 adjacent RuvB subunits; this complex drives branch migration. In the full resolvosome a probable DNA-RuvA(4)-RuvB(12)-RuvC(2) complex forms which resolves the HJ.

The protein localises to the cytoplasm. The enzyme catalyses ATP + H2O = ADP + phosphate + H(+). Its function is as follows. The RuvA-RuvB-RuvC complex processes Holliday junction (HJ) DNA during genetic recombination and DNA repair, while the RuvA-RuvB complex plays an important role in the rescue of blocked DNA replication forks via replication fork reversal (RFR). RuvA specifically binds to HJ cruciform DNA, conferring on it an open structure. The RuvB hexamer acts as an ATP-dependent pump, pulling dsDNA into and through the RuvAB complex. RuvB forms 2 homohexamers on either side of HJ DNA bound by 1 or 2 RuvA tetramers; 4 subunits per hexamer contact DNA at a time. Coordinated motions by a converter formed by DNA-disengaged RuvB subunits stimulates ATP hydrolysis and nucleotide exchange. Immobilization of the converter enables RuvB to convert the ATP-contained energy into a lever motion, pulling 2 nucleotides of DNA out of the RuvA tetramer per ATP hydrolyzed, thus driving DNA branch migration. The RuvB motors rotate together with the DNA substrate, which together with the progressing nucleotide cycle form the mechanistic basis for DNA recombination by continuous HJ branch migration. Branch migration allows RuvC to scan DNA until it finds its consensus sequence, where it cleaves and resolves cruciform DNA. The polypeptide is Holliday junction branch migration complex subunit RuvB (Clostridium botulinum (strain Alaska E43 / Type E3)).